The primary structure comprises 404 residues: Cysteine desulfurase IscS (404 aa).

Residues 75 to 76 (AT), N155, Q183, and 203 to 205 (SAH) each bind pyridoxal 5'-phosphate. The residue at position 206 (K206) is an N6-(pyridoxal phosphate)lysine. T243 contacts pyridoxal 5'-phosphate. The active-site Cysteine persulfide intermediate is the C328. [2Fe-2S] cluster is bound at residue C328.

Belongs to the class-V pyridoxal-phosphate-dependent aminotransferase family. NifS/IscS subfamily. In terms of assembly, homodimer. Forms a heterotetramer with IscU, interacts with other sulfur acceptors. Pyridoxal 5'-phosphate serves as cofactor.

The protein localises to the cytoplasm. The enzyme catalyses (sulfur carrier)-H + L-cysteine = (sulfur carrier)-SH + L-alanine. Its pathway is cofactor biosynthesis; iron-sulfur cluster biosynthesis. Functionally, master enzyme that delivers sulfur to a number of partners involved in Fe-S cluster assembly, tRNA modification or cofactor biosynthesis. Catalyzes the removal of elemental sulfur atoms from cysteine to produce alanine. Functions as a sulfur delivery protein for Fe-S cluster synthesis onto IscU, an Fe-S scaffold assembly protein, as well as other S acceptor proteins. The chain is Cysteine desulfurase IscS from Pseudomonas fluorescens (strain SBW25).